The primary structure comprises 320 residues: Malate dehydrogenase (320 aa).

NAD(+) contacts are provided by residues 10–15 (GSGMIG) and D34. The substrate site is built by R83 and R89. Residues N96 and 119–121 (ITN) contribute to the NAD(+) site. N121 and R152 together coordinate substrate. The Proton acceptor role is filled by H176.

Belongs to the LDH/MDH superfamily. MDH type 3 family.

It carries out the reaction (S)-malate + NAD(+) = oxaloacetate + NADH + H(+). Its function is as follows. Catalyzes the reversible oxidation of malate to oxaloacetate. This Rhizobium meliloti (strain 1021) (Ensifer meliloti) protein is Malate dehydrogenase.